Here is a 186-residue protein sequence, read N- to C-terminus: Peptide deformylase (186 aa).

2 residues coordinate Fe cation: cysteine 99 and histidine 141. The active site involves glutamate 142. Residue histidine 145 participates in Fe cation binding.

Belongs to the polypeptide deformylase family. The cofactor is Fe(2+).

The enzyme catalyses N-terminal N-formyl-L-methionyl-[peptide] + H2O = N-terminal L-methionyl-[peptide] + formate. Its function is as follows. Removes the formyl group from the N-terminal Met of newly synthesized proteins. Requires at least a dipeptide for an efficient rate of reaction. N-terminal L-methionine is a prerequisite for activity but the enzyme has broad specificity at other positions. In Chlamydia pneumoniae (Chlamydophila pneumoniae), this protein is Peptide deformylase.